The chain runs to 337 residues: Phosphate acyltransferase (337 aa).

This sequence belongs to the PlsX family. As to quaternary structure, homodimer. Probably interacts with PlsY.

Its subcellular location is the cytoplasm. The catalysed reaction is a fatty acyl-[ACP] + phosphate = an acyl phosphate + holo-[ACP]. It participates in lipid metabolism; phospholipid metabolism. Catalyzes the reversible formation of acyl-phosphate (acyl-PO(4)) from acyl-[acyl-carrier-protein] (acyl-ACP). This enzyme utilizes acyl-ACP as fatty acyl donor, but not acyl-CoA. The chain is Phosphate acyltransferase from Polynucleobacter necessarius subsp. necessarius (strain STIR1).